Reading from the N-terminus, the 360-residue chain is Methylthioribose-1-phosphate isomerase (360 aa).

Aspartate 252 serves as the catalytic Proton donor.

This sequence belongs to the eIF-2B alpha/beta/delta subunits family. MtnA subfamily.

Its subcellular location is the cytoplasm. The protein resides in the nucleus. It carries out the reaction 5-(methylsulfanyl)-alpha-D-ribose 1-phosphate = 5-(methylsulfanyl)-D-ribulose 1-phosphate. Its pathway is amino-acid biosynthesis; L-methionine biosynthesis via salvage pathway; L-methionine from S-methyl-5-thio-alpha-D-ribose 1-phosphate: step 1/6. In terms of biological role, catalyzes the interconversion of methylthioribose-1-phosphate (MTR-1-P) into methylthioribulose-1-phosphate (MTRu-1-P). This is Methylthioribose-1-phosphate isomerase from Trichoplax adhaerens (Trichoplax reptans).